We begin with the raw amino-acid sequence, 782 residues long: Protein PAT1 homolog 1 (782 aa).

Disordered regions lie at residues 96 to 153, 177 to 217, 332 to 372, and 460 to 481; these read GPKH…HSKP, LPES…YSAP, VREH…SKHM, and EVDS…GKHL. Over residues 108 to 117 the composition is skewed to low complexity; sequence SGSFSRESSS. A compositionally biased stretch (polar residues) spans 208–217; the sequence is GGSQLTYSAP. Residues 335-347 show a composition bias toward basic residues; sequence HKHKSSHRSRKNR. A compositionally biased stretch (polar residues) spans 348-366; it reads GLSQQTSDAASQKSETGLQ. Residues 471–481 show a composition bias toward basic and acidic residues; that stretch reads SGDHKGSGKHL.

As to quaternary structure, interacts with AFPH2/NINJA. In terms of tissue distribution, expressed in root vasculature, shoot apical meristem (SAM) and leaves.

In terms of biological role, activator of mRNA decapping. Involved in mRNA decay via decapping. Involved in the regulation of root stem cell niche identity. Maintains root stem cell niche stability through the interaction with the negative regulator of jasmonate signaling AFPH2/NINJA, and the regulation of cell division. This chain is Protein PAT1 homolog 1, found in Arabidopsis thaliana (Mouse-ear cress).